Reading from the N-terminus, the 186-residue chain is MAGHRLVLVLGDLHIPHRCNSLPAKFKKLLVPGKIQHILCTGNLCTKESYDYLKTLAGDVHIVRGDFDENLNYPEQKVVTVGQFKIGLIHGHQVIPWGDMASLALLQRQFDVDILISGHTHKFEAFEHENKFYINPGSATGAYNALETNIIPSFVLMDIQASTVVTYVYQLIGDDVKVERIEYKKS.

At lysine 54 the chain carries N6-acetyllysine.

The protein belongs to the VPS29 family. In terms of assembly, component of the commander complex consisting of the CCC subcomplex and the retriever subcomplex. Component of the heterotrimeric retriever complex formed by VPS26C, VPS29 and VPS35L; within the complex interacts with VPS35L. Component of the heterotrimeric retromer cargo-selective complex (CSC), also described as vacuolar protein sorting subcomplex (VPS), formed by VPS26 (VPS26A or VPS26B), VPS29 and VPS35. The CSC has a highly elongated structure with VPS26 and VPS29 binding independently at opposite distal ends of VPS35 as central platform. The CSC is believed to associate with variable sorting nexins to form functionally distinct retromer complex variants. The originally described retromer complex (also called SNX-BAR retromer) is a pentamer containing the CSC and a heterodimeric membrane-deforming subcomplex formed between SNX1 or SNX2 and SNX5 or SNX6 (also called SNX-BAR subcomplex); the respective CSC and SNX-BAR subcomplexes associate with low affinity. The CSC associates with SNX3 to form a SNX3-retromer complex. The CSC associates with SNX27, the WASH complex and the SNX-BAR subcomplex to form the SNX27-retromer complex. Interacts with VPS26A, VPS35, SNX1, SNX2, SNX3, SNX27, WASHC5. Interacts with TBC1D5; this interaction is blocked by VPS35L in the retriever complex. Interacts with SNX17; the interaction is indirect; SNX17 (via its C-terminus) interacts with the retriever complex (via VPS26C and VPS35L). Interacts with VPS26B and ANKRD27.

The protein resides in the cytoplasm. It is found in the membrane. It localises to the endosome membrane. Its subcellular location is the early endosome. The protein localises to the late endosome. In terms of biological role, component of the commander complex that is essential for endosomal recycling of transmembrane cargos; the commander complex is composed of the CCC subcomplex and the retriever subcomplex. Component of the retriever complex, which is a heterotrimeric complex related to retromer cargo-selective complex (CSC) and essential for retromer-independent retrieval and recycling of numerous cargos such as integrin alpha-5/beta-1 (ITGA5:ITGB1). Component of the retromer cargo-selective complex (CSC). The CSC is believed to be the core functional component of retromer or respective retromer complex variants acting to prevent missorting of selected transmembrane cargo proteins into the lysosomal degradation pathway. The recruitment of the CSC to the endosomal membrane involves RAB7A and SNX3. The SNX-BAR retromer mediates retrograde transport of cargo proteins from endosomes to the trans-Golgi network (TGN) and is involved in endosome-to-plasma membrane transport for cargo protein recycling. The SNX3-retromer mediates the retrograde endosome-to-TGN transport of WLS distinct from the SNX-BAR retromer pathway. The SNX27-retromer is believed to be involved in endosome-to-plasma membrane trafficking and recycling of a broad spectrum of cargo proteins. The CSC seems to act as recruitment hub for other proteins, such as the WASH complex and TBC1D5. Required to regulate transcytosis of the polymeric immunoglobulin receptor (pIgR-pIgA). In the endosomes, retriever complex drives the retrieval and recycling of NxxY-motif-containing cargo proteins by coupling to SNX17, a cargo essential for the homeostatic maintenance of numerous cell surface proteins associated with processes that include cell migration, cell adhesion, nutrient supply and cell signaling. The recruitment of the retriever complex to the endosomal membrane involves CCC and WASH complexes. Involved in GLUT1 endosome-to-plasma membrane trafficking; the function is dependent of association with ANKRD27. This chain is Vacuolar protein sorting-associated protein 29 (VPS29), found in Bos taurus (Bovine).